The primary structure comprises 248 residues: Superoxide dismutase [Mn] 1 (248 aa).

Residues 1–41 (MQTTFRRILILFVGLLVPLFFACQSNSQVDAAPSAAPQLSA) form the signal peptide. 4 residues coordinate Mn(2+): His-68, His-123, Asp-208, and His-212.

It belongs to the iron/manganese superoxide dismutase family. Homodimer. Requires Mn(2+) as cofactor.

The catalysed reaction is 2 superoxide + 2 H(+) = H2O2 + O2. Its function is as follows. Destroys superoxide anion radicals which are normally produced within the cells and which are toxic to biological systems. The protein is Superoxide dismutase [Mn] 1 (sodA1) of Leptolyngbya boryana (Plectonema boryanum).